The following is a 431-amino-acid chain: Glutamyl-tRNA(Gln) amidotransferase subunit A (431 aa).

Catalysis depends on charge relay system residues Lys55 and Ser130. Ser154 acts as the Acyl-ester intermediate in catalysis.

Belongs to the amidase family. GatA subfamily. As to quaternary structure, heterotrimer of A, B and C subunits.

The catalysed reaction is L-glutamyl-tRNA(Gln) + L-glutamine + ATP + H2O = L-glutaminyl-tRNA(Gln) + L-glutamate + ADP + phosphate + H(+). Allows the formation of correctly charged Gln-tRNA(Gln) through the transamidation of misacylated Glu-tRNA(Gln) in organisms which lack glutaminyl-tRNA synthetase. The reaction takes place in the presence of glutamine and ATP through an activated gamma-phospho-Glu-tRNA(Gln). This is Glutamyl-tRNA(Gln) amidotransferase subunit A from Methanococcus maripaludis (strain C5 / ATCC BAA-1333).